The following is an 896-amino-acid chain: Translation initiation factor IF-2 (896 aa).

Composition is skewed to basic and acidic residues over residues Lys-94–Val-159 and Asp-166–Trp-219. Residues Lys-94–Lys-307 are disordered. Residues Gly-256 to Asn-271 show a composition bias toward basic residues. Residues Lys-272–Ala-285 show a composition bias toward basic and acidic residues. A tr-type G domain is found at Pro-395–Lys-564. The G1 stretch occupies residues Gly-404–Thr-411. Gly-404 to Thr-411 is a GTP binding site. A G2 region spans residues Gly-429–His-433. A G3 region spans residues Asp-450–Gly-453. Residues Asp-450 to His-454 and Asn-504 to Asp-507 each bind GTP. The segment at Asn-504–Asp-507 is G4. Positions Ser-540–Lys-542 are G5.

The protein belongs to the TRAFAC class translation factor GTPase superfamily. Classic translation factor GTPase family. IF-2 subfamily.

It localises to the cytoplasm. In terms of biological role, one of the essential components for the initiation of protein synthesis. Protects formylmethionyl-tRNA from spontaneous hydrolysis and promotes its binding to the 30S ribosomal subunits. Also involved in the hydrolysis of GTP during the formation of the 70S ribosomal complex. The chain is Translation initiation factor IF-2 (infB) from Klebsiella oxytoca.